The chain runs to 332 residues: DNA-directed RNA polymerase subunit alpha (332 aa).

Residues 1–234 are alpha N-terminal domain (alpha-NTD); sequence MTVTANQVLR…DQLSVFGDFT (234 aa). The interval 248–332 is alpha C-terminal domain (alpha-CTD); it reads VDPVLLRPID…AGVASHGMLG (85 aa).

It belongs to the RNA polymerase alpha chain family. Homodimer. The RNAP catalytic core consists of 2 alpha, 1 beta, 1 beta' and 1 omega subunit. When a sigma factor is associated with the core the holoenzyme is formed, which can initiate transcription.

The catalysed reaction is RNA(n) + a ribonucleoside 5'-triphosphate = RNA(n+1) + diphosphate. In terms of biological role, DNA-dependent RNA polymerase catalyzes the transcription of DNA into RNA using the four ribonucleoside triphosphates as substrates. This Stenotrophomonas maltophilia (strain K279a) protein is DNA-directed RNA polymerase subunit alpha.